The sequence spans 255 residues: Triosephosphate isomerase (255 aa).

Position 9-11 (9-11) interacts with substrate; sequence NWK. Catalysis depends on H95, which acts as the Electrophile. E167 serves as the catalytic Proton acceptor. Residues G173, S212, and 233-234 each bind substrate; that span reads GG.

Belongs to the triosephosphate isomerase family. Homodimer.

It is found in the cytoplasm. The catalysed reaction is D-glyceraldehyde 3-phosphate = dihydroxyacetone phosphate. The protein operates within carbohydrate biosynthesis; gluconeogenesis. It participates in carbohydrate degradation; glycolysis; D-glyceraldehyde 3-phosphate from glycerone phosphate: step 1/1. Functionally, involved in the gluconeogenesis. Catalyzes stereospecifically the conversion of dihydroxyacetone phosphate (DHAP) to D-glyceraldehyde-3-phosphate (G3P). The protein is Triosephosphate isomerase of Enterobacter cloacae.